Consider the following 194-residue polypeptide: NADH-quinone oxidoreductase subunit B 1 (194 aa).

Residues cysteine 73, cysteine 74, cysteine 138, and cysteine 168 each coordinate [4Fe-4S] cluster.

The protein belongs to the complex I 20 kDa subunit family. NDH-1 is composed of 14 different subunits. Subunits NuoB, C, D, E, F, and G constitute the peripheral sector of the complex. It depends on [4Fe-4S] cluster as a cofactor.

It localises to the cell inner membrane. The catalysed reaction is a quinone + NADH + 5 H(+)(in) = a quinol + NAD(+) + 4 H(+)(out). NDH-1 shuttles electrons from NADH, via FMN and iron-sulfur (Fe-S) centers, to quinones in the respiratory chain. The immediate electron acceptor for the enzyme in this species is believed to be ubiquinone. Couples the redox reaction to proton translocation (for every two electrons transferred, four hydrogen ions are translocated across the cytoplasmic membrane), and thus conserves the redox energy in a proton gradient. The polypeptide is NADH-quinone oxidoreductase subunit B 1 (Rhizobium etli (strain CIAT 652)).